Here is a 196-residue protein sequence, read N- to C-terminus: Glycerol-3-phosphate acyltransferase (196 aa).

5 consecutive transmembrane segments (helical) span residues 4 to 24 (FYIMLLAAYLIGAIPTGVVLT), 53 to 73 (LGVLTLIGDALKGAVPVLIAI), 78 to 98 (LGDAQVGAVAAAAFIGHCYPV), 114 to 134 (IFLVLSPLAVLGAFAVFALLV), and 140 to 160 (VSLGSICAAAAIPILVYFTEG).

Belongs to the PlsY family. As to quaternary structure, probably interacts with PlsX.

It localises to the cell inner membrane. It catalyses the reaction an acyl phosphate + sn-glycerol 3-phosphate = a 1-acyl-sn-glycero-3-phosphate + phosphate. It participates in lipid metabolism; phospholipid metabolism. Functionally, catalyzes the transfer of an acyl group from acyl-phosphate (acyl-PO(4)) to glycerol-3-phosphate (G3P) to form lysophosphatidic acid (LPA). This enzyme utilizes acyl-phosphate as fatty acyl donor, but not acyl-CoA or acyl-ACP. This is Glycerol-3-phosphate acyltransferase from Syntrophotalea carbinolica (strain DSM 2380 / NBRC 103641 / GraBd1) (Pelobacter carbinolicus).